We begin with the raw amino-acid sequence, 530 residues long: T-complex protein 1 subunit zeta-2 (530 aa).

This sequence belongs to the TCP-1 chaperonin family. In terms of assembly, component of the chaperonin-containing T-complex (TRiC), a heterooligomeric complex of about 850 to 900 kDa that forms two stacked rings, 12 to 16 nm in diameter. As to expression, testis-specific.

Its subcellular location is the cytoplasm. Functionally, component of the chaperonin-containing T-complex (TRiC), a molecular chaperone complex that assists the folding of proteins upon ATP hydrolysis. The protein is T-complex protein 1 subunit zeta-2 (CCT6B) of Homo sapiens (Human).